The primary structure comprises 61 residues: Photosystem II reaction center protein K (61 aa).

The propeptide occupies 1-24 (MLNIFSLICICLNSALYSSSLFFA). The chain crosses the membrane as a helical span at residues 40 to 60 (MPVIPLFFFLLAFVWQAAVSF).

The protein belongs to the PsbK family. As to quaternary structure, PSII is composed of 1 copy each of membrane proteins PsbA, PsbB, PsbC, PsbD, PsbE, PsbF, PsbH, PsbI, PsbJ, PsbK, PsbL, PsbM, PsbT, PsbX, PsbY, PsbZ, Psb30/Ycf12, at least 3 peripheral proteins of the oxygen-evolving complex and a large number of cofactors. It forms dimeric complexes.

It is found in the plastid. The protein resides in the chloroplast thylakoid membrane. Its function is as follows. One of the components of the core complex of photosystem II (PSII). PSII is a light-driven water:plastoquinone oxidoreductase that uses light energy to abstract electrons from H(2)O, generating O(2) and a proton gradient subsequently used for ATP formation. It consists of a core antenna complex that captures photons, and an electron transfer chain that converts photonic excitation into a charge separation. In Panax ginseng (Korean ginseng), this protein is Photosystem II reaction center protein K.